Consider the following 432-residue polypeptide: Adenylosuccinate synthetase (432 aa).

GTP contacts are provided by residues 13 to 19 (GDEGKGK) and 41 to 43 (GHT). Aspartate 14 serves as the catalytic Proton acceptor. Aspartate 14 and glycine 41 together coordinate Mg(2+). Residues 14–17 (DEGK), 39–42 (NAGH), threonine 130, arginine 144, glutamine 225, threonine 240, and arginine 304 contribute to the IMP site. Catalysis depends on histidine 42, which acts as the Proton donor. 300 to 306 (ATTGRRR) contributes to the substrate binding site. GTP-binding positions include arginine 306, 332–334 (KLD), and 415–417 (STG).

It belongs to the adenylosuccinate synthetase family. As to quaternary structure, homodimer. The cofactor is Mg(2+).

The protein resides in the cytoplasm. The enzyme catalyses IMP + L-aspartate + GTP = N(6)-(1,2-dicarboxyethyl)-AMP + GDP + phosphate + 2 H(+). It functions in the pathway purine metabolism; AMP biosynthesis via de novo pathway; AMP from IMP: step 1/2. Functionally, plays an important role in the de novo pathway of purine nucleotide biosynthesis. Catalyzes the first committed step in the biosynthesis of AMP from IMP. This Klebsiella pneumoniae (strain 342) protein is Adenylosuccinate synthetase.